We begin with the raw amino-acid sequence, 407 residues long: Zinc finger protein 260 (407 aa).

The tract at residues 1 to 21 (MLESLQPESELLHDEPDPGEK) is disordered. Residues 10 to 21 (ELLHDEPDPGEK) are compositionally biased toward basic and acidic residues. The C2H2-type 1 zinc finger occupies 23–45 (YECDECRKTFSLEQHFVEHKKTH). The C2H2-type 2; degenerate zinc-finger motif lies at 51–73 (PECTGCGEEFSKASSLTRHLRSR). 11 C2H2-type zinc fingers span residues 79–101 (YKCG…QKQH), 131–153 (YACK…EKIH), 159–181 (FECN…QNVH), 187–209 (FKCN…QRIH), 215–237 (YECK…QRSH), 243–265 (YTCK…EKIH), 271–293 (YKCN…HNIH), 299–321 (YECN…VRIH), 327–349 (YECK…MRSH), 355–377 (YGCN…MRIH), and 383–405 (YQCS…QRIH).

Belongs to the krueppel C2H2-type zinc-finger protein family. Binds DNA. Interacts with GATA4. In terms of tissue distribution, expressed in both embryonic, fetal and adult heart. Also expressed in lung, skeletal muscle and adrenal glands.

It localises to the nucleus. Functionally, transcription factor that acts as a cardiac regulator and an effector of alpha1-adrenergic signaling. Binds to PE response elements (PERE) present in the promoter of genes such as ANF/NPPA and acts as a direct transcriptional activator of NPPA. Also acts as a cofactor with GATA4, a key cardiac regulator. The polypeptide is Zinc finger protein 260 (Znf260) (Rattus norvegicus (Rat)).